Reading from the N-terminus, the 92-residue chain is Small ribosomal subunit protein bS20 (92 aa).

A compositionally biased stretch (basic residues) spans 1–11 (MANIKSQKKRI). Positions 1 to 22 (MANIKSQKKRIRQNEKARLRNK) are disordered.

It belongs to the bacterial ribosomal protein bS20 family.

Binds directly to 16S ribosomal RNA. The chain is Small ribosomal subunit protein bS20 from Thermobifida fusca (strain YX).